Here is a 508-residue protein sequence, read N- to C-terminus: Protein DETOXIFICATION 52 (508 aa).

12 consecutive transmembrane segments (helical) span residues 48 to 68 (ILAA…LGHI), 78 to 98 (LAIA…ALGM), 122 to 142 (VLFL…LGKI), 156 to 176 (AQTY…LHPL), 189 to 209 (LTLA…FLVS), 222 to 242 (AAAS…IAGL), 270 to 290 (IGVC…GLLI), 300 to 320 (GILI…GLAV), 341 to 361 (IVAV…AWGV), 368 to 388 (IFTN…ILGL), 415 to 437 (INLG…WAAY), and 441 to 463 (GLWV…VVAT).

This sequence belongs to the multi antimicrobial extrusion (MATE) (TC 2.A.66.1) family. Detected in the part of the veins in cotyledons of 6-day-old seedlings and the basal parts of the petioles in older plants. Highly expressed in the vascular tissues of hypocotyl in dark-grown seedlings.

The protein resides in the late endosome membrane. In terms of biological role, may act as a negative regulator of hypocotyl cell elongation in the light. The sequence is that of Protein DETOXIFICATION 52 from Arabidopsis thaliana (Mouse-ear cress).